Here is a 510-residue protein sequence, read N- to C-terminus: Probable cytochrome P450 312a1 (510 aa).

Heme is bound at residue C455.

It belongs to the cytochrome P450 family. Heme is required as a cofactor.

The protein resides in the endoplasmic reticulum membrane. The protein localises to the microsome membrane. May be involved in the metabolism of insect hormones and in the breakdown of synthetic insecticides. In Drosophila melanogaster (Fruit fly), this protein is Probable cytochrome P450 312a1 (Cyp312a1).